Here is a 296-residue protein sequence, read N- to C-terminus: 4-hydroxy-tetrahydrodipicolinate synthase (296 aa).

Thr-44 is a binding site for pyruvate. The Proton donor/acceptor role is filled by Tyr-132. Residue Lys-162 is the Schiff-base intermediate with substrate of the active site. Ile-204 is a binding site for pyruvate.

It belongs to the DapA family. As to quaternary structure, homotetramer; dimer of dimers.

It localises to the cytoplasm. It catalyses the reaction L-aspartate 4-semialdehyde + pyruvate = (2S,4S)-4-hydroxy-2,3,4,5-tetrahydrodipicolinate + H2O + H(+). Its pathway is amino-acid biosynthesis; L-lysine biosynthesis via DAP pathway; (S)-tetrahydrodipicolinate from L-aspartate: step 3/4. Its function is as follows. Catalyzes the condensation of (S)-aspartate-beta-semialdehyde [(S)-ASA] and pyruvate to 4-hydroxy-tetrahydrodipicolinate (HTPA). This Novosphingobium aromaticivorans (strain ATCC 700278 / DSM 12444 / CCUG 56034 / CIP 105152 / NBRC 16084 / F199) protein is 4-hydroxy-tetrahydrodipicolinate synthase.